A 357-amino-acid polypeptide reads, in one-letter code: Large ribosomal subunit protein mL45 (357 aa).

Positions 333–357 are disordered; that stretch reads EAKALPLRTTEKLEEAKKEKEQQEI. The segment covering 341–357 has biased composition (basic and acidic residues); that stretch reads TTEKLEEAKKEKEQQEI.

Belongs to the mitochondrion-specific ribosomal protein mL45 family.

The protein localises to the mitochondrion. The sequence is that of Large ribosomal subunit protein mL45 (mrpl-45) from Caenorhabditis elegans.